Here is a 422-residue protein sequence, read N- to C-terminus: Metallocarboxypeptidase A (422 aa).

The N-terminal stretch at 1-17 (MRSVLSLALLAANVVTA) is a signal peptide. A propeptide spans 18 to 112 (AVVSPFDYSG…FEAYSAGYAP (95 aa)) (activation peptide). The Peptidase M14 domain maps to 119–419 (SYHSYQDHIS…AGTVAMLKAV (301 aa)). 2 residues coordinate Zn(2+): His179 and Glu182. Residues 179–182 (HARE), Arg237, and 254–255 (NR) contribute to the substrate site. Cys248 and Cys271 are disulfide-bonded. Zn(2+) is bound at residue His309. 310–311 (SY) is a binding site for substrate. The Proton donor/acceptor role is filled by Glu385.

Belongs to the peptidase M14 family. Zn(2+) serves as cofactor.

Its subcellular location is the secreted. In terms of biological role, extracellular metalloprotease that contributes to pathogenicity. The chain is Metallocarboxypeptidase A (MCPA) from Trichophyton equinum (Horse ringworm fungus).